A 445-amino-acid polypeptide reads, in one-letter code: 4-hydroxyphenylpyruvate dioxygenase (445 aa).

Over residues 1–11 the composition is skewed to polar residues; that stretch reads MGHQNAAVSEN. The interval 1–20 is disordered; that stretch reads MGHQNAAVSENQNHDDGAAS. 2 consecutive VOC domains span residues 46 to 192 and 223 to 383; these read RFHH…YVSY and RLDH…IFTK. 3 residues coordinate Fe cation: His226, His308, and Glu394.

It belongs to the 4HPPD family. In terms of assembly, homodimer. Fe cation serves as cofactor.

The protein resides in the cytoplasm. The enzyme catalyses 3-(4-hydroxyphenyl)pyruvate + O2 = homogentisate + CO2. It participates in amino-acid degradation; L-phenylalanine degradation; acetoacetate and fumarate from L-phenylalanine: step 3/6. Its pathway is cofactor biosynthesis; prenylquinone biosynthesis. In terms of biological role, catalyzes the conversion of 4-hydroxyphenylpyruvic acid to homogentisic acid, one of the steps in tyrosine catabolism. This is 4-hydroxyphenylpyruvate dioxygenase (HPD) from Arabidopsis thaliana (Mouse-ear cress).